The sequence spans 217 residues: Flagellin B2 (217 aa).

Residues 1 to 12 constitute a propeptide that is removed on maturation; that stretch reads MKVFEFLKGKRG.

It belongs to the archaeal flagellin family.

The protein resides in the archaeal flagellum. Its function is as follows. Flagellin is the subunit protein which polymerizes to form the filaments of archaeal flagella. This Methanocaldococcus jannaschii (strain ATCC 43067 / DSM 2661 / JAL-1 / JCM 10045 / NBRC 100440) (Methanococcus jannaschii) protein is Flagellin B2 (flaB2).